The chain runs to 558 residues: Eukaryotic translation initiation factor 3 subunit D (558 aa).

Residues 296 to 310 are RNA gate; the sequence is EFDLLTVNETSVEPP. The tract at residues 534-558 is disordered; the sequence is DNTFESEGEEEDSDEEEQVKDAFQR. A compositionally biased stretch (acidic residues) spans 537 to 551; the sequence is FESEGEEEDSDEEEQ.

It belongs to the eIF-3 subunit D family. In terms of assembly, component of the eukaryotic translation initiation factor 3 (eIF-3) complex.

The protein localises to the cytoplasm. Functionally, mRNA cap-binding component of the eukaryotic translation initiation factor 3 (eIF-3) complex, which is involved in protein synthesis of a specialized repertoire of mRNAs and, together with other initiation factors, stimulates binding of mRNA and methionyl-tRNAi to the 40S ribosome. The eIF-3 complex specifically targets and initiates translation of a subset of mRNAs involved in cell proliferation. In the eIF-3 complex, eif3d specifically recognizes and binds the 7-methylguanosine cap of a subset of mRNAs. In Nasonia vitripennis (Parasitic wasp), this protein is Eukaryotic translation initiation factor 3 subunit D.